A 666-amino-acid chain; its full sequence is DNA-directed RNA polymerase III subunit rpc3 (666 aa).

2 disordered regions span residues 130–153 (HEPH…VHSY) and 375–455 (SRLD…TESR). Residues 135 to 153 (NGNSNETNGATNGNGVHSY) are compositionally biased toward polar residues. A leucine-zipper region spans residues 593 to 614 (TYKAMSRCLQRLDVEKRRKANI).

The protein belongs to the RNA polymerase beta chain family. In terms of assembly, component of the RNA polymerase III (Pol III) complex consisting of 17 subunits.

The protein localises to the nucleus. Functionally, DNA-dependent RNA polymerase catalyzes the transcription of DNA into RNA using the four ribonucleoside triphosphates as substrates. Specific core component of RNA polymerase III which synthesizes small RNAs, such as 5S rRNA and tRNAs. In Botryotinia fuckeliana (strain B05.10) (Noble rot fungus), this protein is DNA-directed RNA polymerase III subunit rpc3 (rpc82).